Reading from the N-terminus, the 58-residue chain is Small ribosomal subunit protein bS21 (58 aa).

The protein belongs to the bacterial ribosomal protein bS21 family.

The polypeptide is Small ribosomal subunit protein bS21 (Latilactobacillus sakei subsp. sakei (strain 23K) (Lactobacillus sakei subsp. sakei)).